A 156-amino-acid chain; its full sequence is Small ribosomal subunit protein uS7 (156 aa).

This sequence belongs to the universal ribosomal protein uS7 family. As to quaternary structure, part of the 30S ribosomal subunit. Contacts proteins S9 and S11.

Functionally, one of the primary rRNA binding proteins, it binds directly to 16S rRNA where it nucleates assembly of the head domain of the 30S subunit. Is located at the subunit interface close to the decoding center, probably blocks exit of the E-site tRNA. This Novosphingobium aromaticivorans (strain ATCC 700278 / DSM 12444 / CCUG 56034 / CIP 105152 / NBRC 16084 / F199) protein is Small ribosomal subunit protein uS7.